The primary structure comprises 63 residues: Cecropin-A1 (63 aa).

The N-terminal stretch at 1 to 23 (MNFYNIFVFVALILAITIGQSEA) is a signal peptide. At Arg-62 the chain carries Arginine amide.

It belongs to the cecropin family.

It is found in the secreted. Functionally, cecropins have lytic and antibacterial activity against several Gram-positive and Gram-negative bacteria. The polypeptide is Cecropin-A1 (CecA1) (Drosophila sechellia (Fruit fly)).